The following is a 316-amino-acid chain: 4-diphosphocytidyl-2-C-methyl-D-erythritol kinase (316 aa).

K32 is a catalytic residue. ATP is bound at residue 126–136; the sequence is PVGAGLGGGSA. Residue D168 is part of the active site.

It belongs to the GHMP kinase family. IspE subfamily.

The enzyme catalyses 4-CDP-2-C-methyl-D-erythritol + ATP = 4-CDP-2-C-methyl-D-erythritol 2-phosphate + ADP + H(+). It functions in the pathway isoprenoid biosynthesis; isopentenyl diphosphate biosynthesis via DXP pathway; isopentenyl diphosphate from 1-deoxy-D-xylulose 5-phosphate: step 3/6. Catalyzes the phosphorylation of the position 2 hydroxy group of 4-diphosphocytidyl-2C-methyl-D-erythritol. In Bifidobacterium longum (strain NCC 2705), this protein is 4-diphosphocytidyl-2-C-methyl-D-erythritol kinase.